Here is a 216-residue protein sequence, read N- to C-terminus: LexA repressor (216 aa).

Residues 29–49 constitute a DNA-binding region (H-T-H motif); that stretch reads RAEIAQALGFRSPNAAEDHLK. Active-site for autocatalytic cleavage activity residues include Ser134 and Lys171.

This sequence belongs to the peptidase S24 family. As to quaternary structure, homodimer.

The catalysed reaction is Hydrolysis of Ala-|-Gly bond in repressor LexA.. Represses a number of genes involved in the response to DNA damage (SOS response), including recA and lexA. In the presence of single-stranded DNA, RecA interacts with LexA causing an autocatalytic cleavage which disrupts the DNA-binding part of LexA, leading to derepression of the SOS regulon and eventually DNA repair. The chain is LexA repressor from Bordetella parapertussis (strain 12822 / ATCC BAA-587 / NCTC 13253).